We begin with the raw amino-acid sequence, 413 residues long: Transmembrane protein 184A (413 aa).

Transmembrane regions (helical) follow at residues 47-69, 93-113, 130-150, 187-207, 223-243, 258-278, and 300-320; these read WLFLTSALARGVSGIFVWTALVL, LLLIVPIYAFDSWLSLLLLGD, FVIYSFLSLCFQYLGGEGAIM, LQFCLVKPVMAVTTIILQAFG, VTLIYNASVSLALYALFLFYF, FLTIKAVIFLSFWQGLLLAIL, and LAAGYQNFIICVEMLFASVAL. Positions 372–413 are disordered; the sequence is QHYTQQATHEAPRPGTHPSGGSGGSRKSRSLEKRMLIPSEDL.

It belongs to the TMEM184 family. In terms of tissue distribution, expressed in vascular cells (at protein level).

The protein localises to the cell membrane. It localises to the cytoplasm. It is found in the perinuclear region. Its subcellular location is the cytoplasmic vesicle membrane. The protein resides in the early endosome membrane. The protein localises to the endosome. It localises to the cytoplasmic vesicle. It is found in the secretory vesicle membrane. Its function is as follows. Acts as a heparin receptor in vascular cells. May be involved in vesicle transport in exocrine cells and Sertoli cells. The protein is Transmembrane protein 184A (TMEM184A) of Homo sapiens (Human).